Here is a 249-residue protein sequence, read N- to C-terminus: Small ribosomal subunit protein uS2 (249 aa).

The protein belongs to the universal ribosomal protein uS2 family.

In Listeria innocua serovar 6a (strain ATCC BAA-680 / CLIP 11262), this protein is Small ribosomal subunit protein uS2.